The sequence spans 307 residues: MmsAB operon regulatory protein (307 aa).

The HTH araC/xylS-type domain maps to 201–299 (DGLHAYMREH…GLSPSAYRQR (99 aa)). 2 DNA-binding regions (H-T-H motif) span residues 218 to 239 (ERLA…KAIT) and 266 to 289 (VARV…SKVM).

Regulatory protein for the mmsAB operon. Activates the transcription of the mmsAB genes. This chain is MmsAB operon regulatory protein, found in Pseudomonas aeruginosa (strain ATCC 15692 / DSM 22644 / CIP 104116 / JCM 14847 / LMG 12228 / 1C / PRS 101 / PAO1).